We begin with the raw amino-acid sequence, 424 residues long: Serine--tRNA ligase (424 aa).

230-232 (TAE) is a binding site for L-serine. 261–263 (RSE) is a binding site for ATP. Glu284 lines the L-serine pocket. 348 to 351 (EISS) serves as a coordination point for ATP. Ser384 is a binding site for L-serine.

The protein belongs to the class-II aminoacyl-tRNA synthetase family. Type-1 seryl-tRNA synthetase subfamily. In terms of assembly, homodimer. The tRNA molecule binds across the dimer.

It localises to the cytoplasm. The catalysed reaction is tRNA(Ser) + L-serine + ATP = L-seryl-tRNA(Ser) + AMP + diphosphate + H(+). It carries out the reaction tRNA(Sec) + L-serine + ATP = L-seryl-tRNA(Sec) + AMP + diphosphate + H(+). Its pathway is aminoacyl-tRNA biosynthesis; selenocysteinyl-tRNA(Sec) biosynthesis; L-seryl-tRNA(Sec) from L-serine and tRNA(Sec): step 1/1. Catalyzes the attachment of serine to tRNA(Ser). Is also able to aminoacylate tRNA(Sec) with serine, to form the misacylated tRNA L-seryl-tRNA(Sec), which will be further converted into selenocysteinyl-tRNA(Sec). The protein is Serine--tRNA ligase of Streptococcus pneumoniae (strain 70585).